The sequence spans 163 residues: Nucleotide-binding protein YajQ (163 aa).

Belongs to the YajQ family.

Its function is as follows. Nucleotide-binding protein. The protein is Nucleotide-binding protein YajQ of Salmonella agona (strain SL483).